The chain runs to 83 residues: MKEKKRKGMSNKKVLTGVVVATKCDKTIKVMVSRMVRHKTYKKIVKKRKNYVVHDEYNKCKCGDVVKIQEHIPISATKRWIVI.

Belongs to the universal ribosomal protein uS17 family. Part of the 30S ribosomal subunit.

Functionally, one of the primary rRNA binding proteins, it binds specifically to the 5'-end of 16S ribosomal RNA. In Ehrlichia canis (strain Jake), this protein is Small ribosomal subunit protein uS17.